The following is a 250-amino-acid chain: 5'-nucleotidase SurE (250 aa).

Residues D8, D9, S40, and N95 each contribute to the a divalent metal cation site.

The protein belongs to the SurE nucleotidase family. A divalent metal cation serves as cofactor.

Its subcellular location is the cytoplasm. It carries out the reaction a ribonucleoside 5'-phosphate + H2O = a ribonucleoside + phosphate. Nucleotidase that shows phosphatase activity on nucleoside 5'-monophosphates. This is 5'-nucleotidase SurE from Nitratidesulfovibrio vulgaris (strain DP4) (Desulfovibrio vulgaris).